Consider the following 3023-residue polypeptide: Genome polyprotein (3023 aa).

In terms of domain architecture, Peptidase S30 spans 132–274 (TCSSSGLDNL…QSITLRATHF (143 aa)). Residues histidine 183, aspartate 192, and serine 225 each act as for P1 proteinase activity in the active site. Residues 325 to 328 (KITC) carry the Involved in interaction with stylet and aphid transmission motif. The short motif at 583–585 (PTK) is the Involved in virions binding and aphid transmission element. The 123-residue stretch at 609 to 731 (MYIAKEGYCY…ESPMAQYKVG (123 aa)) folds into the Peptidase C6 domain. Active-site for helper component proteinase activity residues include cysteine 617 and histidine 690. The 153-residue stretch at 1202–1354 (QIAHNEHKDI…TQYPVELLIE (153 aa)) folds into the Helicase ATP-binding domain. 1215–1222 (GAVGSGKS) serves as a coordination point for ATP. The DEFH box motif lies at 1304–1307 (DEFH). Residues 1367-1532 (GTDAHADVVK…GLPVTTQNVS (166 aa)) form the Helicase C-terminal domain. The short motif at 1796 to 1800 (GIGLG) is the GxxxG motif element. The Nuclear localization signal motif lies at 1856–1863 (KKGKSKGK). Position 1878 is an O-(5'-phospho-RNA)-tyrosine (tyrosine 1878). Residue tyrosine 1878 is modified to O-UMP-tyrosine; transient. Residues 2002 to 2218 (SKALLKGVRD…ISWGSFTLVE (217 aa)) form the Peptidase C4 domain. Active-site for nuclear inclusion protein A activity residues include histidine 2047, aspartate 2082, and cysteine 2152. In terms of domain architecture, RdRp catalytic spans 2484–2608 (WVYCDADGSQ…AISPELEHVL (125 aa)). A Phosphothreonine modification is found at threonine 3006.

The protein belongs to the potyviridae genome polyprotein family. As to quaternary structure, interacts with host eIF4E protein (via cap-binding region); this interaction mediates the translation of the VPg-viral RNA conjugates. Part of a complex that comprises VPg, RNA, host EIF4E and EIF4G; this interaction mediates the translation of the VPg-viral RNA conjugates. VPg is uridylylated by the polymerase and is covalently attached to the 5'-end of the genomic RNA. This uridylylated form acts as a nucleotide-peptide primer for the polymerase. In terms of processing, potyviral RNA is expressed as two polyproteins which undergo post-translational proteolytic processing. Genome polyprotein is processed by NIa-pro, P1 and HC-pro proteinases resulting in the production of at least ten individual proteins. P3N-PIPO polyprotein is cleaved by P1 and HC-pro proteinases resulting in the production of three individual proteins. The P1 proteinase and the HC-pro cleave only their respective C-termini autocatalytically. 6K1 is essential for proper proteolytic separation of P3 from CI.

It is found in the host cytoplasmic vesicle. It localises to the host nucleus. Its subcellular location is the virion. It catalyses the reaction RNA(n) + a ribonucleoside 5'-triphosphate = RNA(n+1) + diphosphate. It carries out the reaction Hydrolyzes glutaminyl bonds, and activity is further restricted by preferences for the amino acids in P6 - P1' that vary with the species of potyvirus, e.g. Glu-Xaa-Xaa-Tyr-Xaa-Gln-|-(Ser or Gly) for the enzyme from tobacco etch virus. The natural substrate is the viral polyprotein, but other proteins and oligopeptides containing the appropriate consensus sequence are also cleaved.. The catalysed reaction is Hydrolyzes a Gly-|-Gly bond at its own C-terminus, commonly in the sequence -Tyr-Xaa-Val-Gly-|-Gly, in the processing of the potyviral polyprotein.. In terms of biological role, required for aphid transmission and also has proteolytic activity. Only cleaves a Gly-Gly dipeptide at its own C-terminus. Interacts with virions and aphid stylets. Acts as a suppressor of RNA-mediated gene silencing, also known as post-transcriptional gene silencing (PTGS), a mechanism of plant viral defense that limits the accumulation of viral RNAs. May have RNA-binding activity. Functionally, has helicase activity. It may be involved in replication. Its function is as follows. Indispensable for virus replication. Reduces the abundance of host transcripts related to jasmonic acid biosynthesis therefore altering the host defenses. In order to increase its own stability, decreases host protein degradation pathways. Indispensable for virus replication. In terms of biological role, mediates the cap-independent, EIF4E-dependent translation of viral genomic RNAs. Binds to the cap-binding site of host EIF4E and thus interferes with the host EIF4E-dependent mRNA export and translation. VPg-RNA directly binds EIF4E and is a template for transcription. Also forms trimeric complexes with EIF4E-EIF4G, which are templates for translation. Functionally, has RNA-binding and proteolytic activities. Main protease that processes most of the polyprotein cleavages. Its function is as follows. An RNA-dependent RNA polymerase that plays an essential role in the virus replication. Involved in aphid transmission, cell-to-cell and systemis movement, encapsidation of the viral RNA and in the regulation of viral RNA amplification. This Tobacco vein mottling virus (TVMV) protein is Genome polyprotein.